Here is a 153-residue protein sequence, read N- to C-terminus: Ribosome maturation factor RimP (153 aa).

Belongs to the RimP family.

It is found in the cytoplasm. Functionally, required for maturation of 30S ribosomal subunits. The polypeptide is Ribosome maturation factor RimP (Coxiella burnetii (strain RSA 331 / Henzerling II)).